Reading from the N-terminus, the 466-residue chain is Asparagine--tRNA ligase (466 aa).

It belongs to the class-II aminoacyl-tRNA synthetase family. As to quaternary structure, homodimer.

The protein resides in the cytoplasm. The catalysed reaction is tRNA(Asn) + L-asparagine + ATP = L-asparaginyl-tRNA(Asn) + AMP + diphosphate + H(+). The protein is Asparagine--tRNA ligase of Aliivibrio fischeri (strain ATCC 700601 / ES114) (Vibrio fischeri).